Here is a 295-residue protein sequence, read N- to C-terminus: Acetaldehyde dehydrogenase (295 aa).

11-14 contacts NAD(+); that stretch reads SGNI. Catalysis depends on Cys-127, which acts as the Acyl-thioester intermediate. NAD(+) is bound by residues 158 to 166 and Asn-270; that span reads SAGPGTRAN.

It belongs to the acetaldehyde dehydrogenase family.

The catalysed reaction is acetaldehyde + NAD(+) + CoA = acetyl-CoA + NADH + H(+). This is Acetaldehyde dehydrogenase (nbaJ) from Geobacillus thermodenitrificans (strain NG80-2).